A 364-amino-acid polypeptide reads, in one-letter code: Fructose-bisphosphate aldolase C-A (364 aa).

The substrate site is built by Arg56 and Lys147. The Proton acceptor role is filled by Glu188. Residue Lys230 is the Schiff-base intermediate with dihydroxyacetone-P of the active site.

Belongs to the class I fructose-bisphosphate aldolase family. As to quaternary structure, homotetramer. As to expression, expressed specifically in Purkinje cells in the brain.

It carries out the reaction beta-D-fructose 1,6-bisphosphate = D-glyceraldehyde 3-phosphate + dihydroxyacetone phosphate. The protein operates within carbohydrate degradation; glycolysis; D-glyceraldehyde 3-phosphate and glycerone phosphate from D-glucose: step 4/4. This chain is Fructose-bisphosphate aldolase C-A, found in Danio rerio (Zebrafish).